The primary structure comprises 283 residues: Bifunctional protein FolD (283 aa).

NADP(+)-binding positions include Gly165 to Gly167, Thr192, and Val233.

Belongs to the tetrahydrofolate dehydrogenase/cyclohydrolase family. In terms of assembly, homodimer.

The enzyme catalyses (6R)-5,10-methylene-5,6,7,8-tetrahydrofolate + NADP(+) = (6R)-5,10-methenyltetrahydrofolate + NADPH. It catalyses the reaction (6R)-5,10-methenyltetrahydrofolate + H2O = (6R)-10-formyltetrahydrofolate + H(+). It participates in one-carbon metabolism; tetrahydrofolate interconversion. In terms of biological role, catalyzes the oxidation of 5,10-methylenetetrahydrofolate to 5,10-methenyltetrahydrofolate and then the hydrolysis of 5,10-methenyltetrahydrofolate to 10-formyltetrahydrofolate. In Thermobifida fusca (strain YX), this protein is Bifunctional protein FolD.